The following is a 136-amino-acid chain: MARMAVLWRKMRDNFQSKEFREYVSSTHFWGPAFSWGLPLAAFKDMKASPEIISGRMTTALILYSAIFMRFAYRVQPRNLLLMACHCTNVMAQSVQASRYLLYYYGGGGAEAKARDPPATAAAATSPGSQPPKQAS.

The Mitochondrial matrix segment spans residues 2-19 (ARMAVLWRKMRDNFQSKE). The helical transmembrane segment at 20-42 (FREYVSSTHFWGPAFSWGLPLAA) threads the bilayer. The Mother cell cytoplasmic segment spans residues 43 to 51 (FKDMKASPE). The chain crosses the membrane as a helical span at residues 52–74 (IISGRMTTALILYSAIFMRFAYR). At 75–136 (VQPRNLLLMA…PGSQPPKQAS (62 aa)) the chain is on the mitochondrial matrix side. The disordered stretch occupies residues 111-136 (EAKARDPPATAAAATSPGSQPPKQAS). A compositionally biased stretch (low complexity) spans 117-136 (PPATAAAATSPGSQPPKQAS).

This sequence belongs to the mitochondrial pyruvate carrier (MPC) (TC 2.A.105) family.

The protein localises to the mitochondrion inner membrane. The catalysed reaction is pyruvate(out) + H(+)(out) = pyruvate(in) + H(+)(in). In terms of biological role, mediates the uptake of pyruvate into mitochondria. This chain is Mitochondrial pyruvate carrier 1-like protein (MPC1L), found in Homo sapiens (Human).